The sequence spans 841 residues: 27S pre-rRNA (guanosine(2922)-2'-O)-methyltransferase (841 aa).

S-adenosyl-L-methionine contacts are provided by G58, W60, D78, D94, and D119. The active-site Proton acceptor is K159. Residues 360–389 adopt a coiled-coil conformation; it reads QEKQRLNVKRERRRKNEMKQKELQRMQMNM. 2 positions are modified to phosphoserine: S455 and S464. 2 disordered regions span residues 480-534 and 565-654; these read RDAK…DDEA and NNVE…HSRD. Over residues 505-517 the composition is skewed to basic and acidic residues; the sequence is SLEKKEEEGKDYI. Positions 518–534 are enriched in acidic residues; that stretch reads EDNDDEGVEGDSDDDEA. S529 is subject to Phosphoserine. Residues 574–585 show a composition bias toward polar residues; the sequence is NTVNDGIMSSES. The segment covering 598 to 607 has biased composition (basic and acidic residues); the sequence is HEEMHQKQDE. 2 stretches are compositionally biased toward acidic residues: residues 608–621 and 629–641; these read ADSS…DSDF and ASEE…DSEE. A compositionally biased stretch (basic and acidic residues) spans 642 to 654; that stretch reads EKNQTKKEKHSRD.

It belongs to the class I-like SAM-binding methyltransferase superfamily. RNA methyltransferase RlmE family. SPB1 subfamily. In terms of assembly, component of the nucleolar and nucleoplasmic pre-60S ribosomal particle. Interacts with the snoRNA-associated proteins NOP1 and NOP58.

Its subcellular location is the nucleus. The protein resides in the nucleolus. The enzyme catalyses guanosine(2922) in 27S pre-rRNA + S-adenosyl-L-methionine = 2'-O-methylguanosine(2922) in 27S pre-rRNA + S-adenosyl-L-homocysteine + H(+). Required for proper assembly of pre-ribosomal particles during the biogenesis of the 60S ribosomal subunit. Specifically methylates the guanosine in position 2922 of the 25S rRNA at the stage of 27S pre-rRNA maturation. Also methylates the uridine in position 2921 in the absence of methylation of this residue guided by snoRNA snR52 at the stage of 35S pre-rRNA maturation. This is 27S pre-rRNA (guanosine(2922)-2'-O)-methyltransferase from Saccharomyces cerevisiae (strain ATCC 204508 / S288c) (Baker's yeast).